We begin with the raw amino-acid sequence, 245 residues long: 1-(5-phosphoribosyl)-5-[(5-phosphoribosylamino)methylideneamino] imidazole-4-carboxamide isomerase (245 aa).

Residue aspartate 7 is the Proton acceptor of the active site. Aspartate 129 serves as the catalytic Proton donor.

The protein belongs to the HisA/HisF family.

The protein localises to the cytoplasm. The catalysed reaction is 1-(5-phospho-beta-D-ribosyl)-5-[(5-phospho-beta-D-ribosylamino)methylideneamino]imidazole-4-carboxamide = 5-[(5-phospho-1-deoxy-D-ribulos-1-ylimino)methylamino]-1-(5-phospho-beta-D-ribosyl)imidazole-4-carboxamide. Its pathway is amino-acid biosynthesis; L-histidine biosynthesis; L-histidine from 5-phospho-alpha-D-ribose 1-diphosphate: step 4/9. In Shigella flexneri serotype 5b (strain 8401), this protein is 1-(5-phosphoribosyl)-5-[(5-phosphoribosylamino)methylideneamino] imidazole-4-carboxamide isomerase.